Reading from the N-terminus, the 929-residue chain is Ras guanine nucleotide exchange factor M (929 aa).

A compositionally biased stretch (polar residues) spans 1-15 (MWQKPSLTKSMMNEV). Disordered stretches follow at residues 1–102 (MWQK…AAGS) and 169–316 (TNNN…SKSL). Over residues 16 to 33 (SSNSPKSPTLTSSPSTQS) the composition is skewed to low complexity. Gly residues predominate over residues 44-67 (LDGGGGGSNRLIFGGSGGGSGGGS). 2 stretches are compositionally biased toward low complexity: residues 68 to 80 (LPSSPVSSPVNPF) and 169 to 191 (TNNNTTTTTNTNNSNNNNSNNDG). Positions 192-202 (SGSGSGAGGSF) are enriched in gly residues. Low complexity predominate over residues 203–246 (IGTTTSAKTTSTTSTSAATTTTTTTTSSSSSSPSSSSPSSTSPT). Polar residues predominate over residues 247 to 256 (IASNNDNNNK). Residues 270–287 (PPLTLSQSQTQQQQQQKV) show a composition bias toward low complexity. The segment covering 295–305 (RFSTNSSGSQS) has biased composition (polar residues). In terms of domain architecture, N-terminal Ras-GEF spans 390 to 528 (NKFVVVSGPK…PILDLYEKLK (139 aa)). The interval 540 to 583 (SLSGSGGISNNNNGSDLKNSNNGNNSSNNNNSSSNSSSSSSSSD) is disordered. The region spanning 676 to 911 (SPQDIAKQLT…YAFSKFIESP (236 aa)) is the Ras-GEF domain.

Promotes the exchange of Ras-bound GDP by GTP. The sequence is that of Ras guanine nucleotide exchange factor M (gefM) from Dictyostelium discoideum (Social amoeba).